A 905-amino-acid chain; its full sequence is MLGSLFRKVFGSRNDRILKTMKKDVERINLLEPEFEALSDAELKEKTAEFRKRLNDGERIEKILPEAFATVREASRRVFGMRHFDVQLIGGMVLNDNRIAEMKTGEGKTLTATLPAYLNALPGKGVHIITVNDYLAKRDAEFNQPLFDFLGLTVAFNIPGMAPEDKKAAYQADITYGTNNEFGFDYLRDNMAFAPQDRVQRELNYALVDEVDSILIDEARTPLIISGPAEDSSEMYRKMNELVPHLVRQEKEDTEEEQGDGDFTIDEKAKQLHLTEHGQEHIEELLKEKGMLDADDSLYSAANISLLHHINAALRAHHLFQKDVDYIIKDDKVVIVDEHTGRTMEGRRWSEGLHQAVEAKEGVPIQNENQTLASITFQNYFRLYNKLAGMTGTADTEAFEFQSIYGLETIVLPTNKPMVRDDRADLIYLTTLEKYEAIAEDIEECRKQKRPVLVGTVSIENSELLSQLLKKKKIPHAVLNAKFHEHEADIIAQAGRPGTVTIATNMAGRGTDIVLGGSWMAEVEKLEEPSNDKIEKIKQDWQKLHDAVIEAGGLHIIGTERHESRRIDNQLRGRAGRQGDPGSSRFYLSLEDPLMRIFASDRIGTMMKRLGMKEGEAIEHPWVTRAIENAQRKVEGRNFDVRKQLLEYDDVANDQRSVVYDQRNELLDEGDISETIVAIRDDVINSVISEYVPPQSLAELWDLKGLEERLRGDFHIELPLQQWLDEEDHFHEEVLRERVLEELVKAYQEKEEMVGPEVLRRFEKSIMLQSLDQHWKEHLAAMDHLRQGIHLRGYAQKNPKQEYKKEAFELFTEMLEALKLDVVTILSKVKVRAQEDVDAVDEQRKAADSAPREFRHEQSGPAAEEPQKNTDNAQGQPVRKGAKVGRNEPCPCGSGKKYKHCHGKL.

Residues glutamine 87, 105-109, and aspartate 512 each bind ATP; that span reads GEGKT. The interval 836–905 is disordered; it reads DVDAVDEQRK…KKYKHCHGKL (70 aa). The segment covering 841-858 has biased composition (basic and acidic residues); it reads DEQRKAADSAPREFRHEQ. 4 residues coordinate Zn(2+): cysteine 890, cysteine 892, cysteine 901, and histidine 902. The segment covering 896–905 has biased composition (basic residues); it reads KKYKHCHGKL.

The protein belongs to the SecA family. Monomer and homodimer. Part of the essential Sec protein translocation apparatus which comprises SecA, SecYEG and auxiliary proteins SecDF-YajC and YidC. Zn(2+) is required as a cofactor.

Its subcellular location is the cell inner membrane. It is found in the cytoplasm. It carries out the reaction ATP + H2O + cellular proteinSide 1 = ADP + phosphate + cellular proteinSide 2.. In terms of biological role, part of the Sec protein translocase complex. Interacts with the SecYEG preprotein conducting channel. Has a central role in coupling the hydrolysis of ATP to the transfer of proteins into and across the cell membrane, serving both as a receptor for the preprotein-SecB complex and as an ATP-driven molecular motor driving the stepwise translocation of polypeptide chains across the membrane. This is Protein translocase subunit SecA from Idiomarina loihiensis (strain ATCC BAA-735 / DSM 15497 / L2-TR).